The following is a 478-amino-acid chain: Mannose-1-phosphate guanylyltransferase (478 aa).

It belongs to the mannose-6-phosphate isomerase type 2 family.

The catalysed reaction is alpha-D-mannose 1-phosphate + GTP + H(+) = GDP-alpha-D-mannose + diphosphate. It functions in the pathway nucleotide-sugar biosynthesis; GDP-alpha-D-mannose biosynthesis; GDP-alpha-D-mannose from alpha-D-mannose 1-phosphate (GTP route): step 1/1. Involved in the biosynthesis of the capsular polysaccharide colanic acid. The protein is Mannose-1-phosphate guanylyltransferase (manC) of Escherichia coli (strain K12).